A 319-amino-acid polypeptide reads, in one-letter code: Acetyl-coenzyme A carboxylase carboxyl transferase subunit alpha (319 aa).

Residues 35 to 296 enclose the CoA carboxyltransferase C-terminal domain; that stretch reads NLDEEVQRLR…KAQLLADLAD (262 aa).

This sequence belongs to the AccA family. Acetyl-CoA carboxylase is a heterohexamer composed of biotin carboxyl carrier protein (AccB), biotin carboxylase (AccC) and two subunits each of ACCase subunit alpha (AccA) and ACCase subunit beta (AccD).

Its subcellular location is the cytoplasm. It catalyses the reaction N(6)-carboxybiotinyl-L-lysyl-[protein] + acetyl-CoA = N(6)-biotinyl-L-lysyl-[protein] + malonyl-CoA. It functions in the pathway lipid metabolism; malonyl-CoA biosynthesis; malonyl-CoA from acetyl-CoA: step 1/1. Functionally, component of the acetyl coenzyme A carboxylase (ACC) complex. First, biotin carboxylase catalyzes the carboxylation of biotin on its carrier protein (BCCP) and then the CO(2) group is transferred by the carboxyltransferase to acetyl-CoA to form malonyl-CoA. In Erwinia tasmaniensis (strain DSM 17950 / CFBP 7177 / CIP 109463 / NCPPB 4357 / Et1/99), this protein is Acetyl-coenzyme A carboxylase carboxyl transferase subunit alpha.